Here is a 323-residue protein sequence, read N- to C-terminus: MPADHIPALALAGPTASGKTAAAFAIADALAPRLPVEIISVDSALVYRGMDIGTAKPTPAEQARVPHHLIDIRDPLQAYSAAEFVQDATRLIGEIRARGALPLLVGGTMLYFKALFDGIDDMPPADAAVRARLEAQAAAIGWSGMHAELARVDPPTAARLAPGDSQRIQRALEVWHVSGRPLSSFHTTKTVAASDRPMSAASLFSLEPHDRAWLHGRIAERFHAMLAAGFLDEVLRLRARGDLHAELPSMRCVGYRQAWESLDGLYPMSSLPERGIAATRQLAKRQITWLRSMPQRHSIACDAPDATAQLVQAVRARVWGGSA.

Residue 13–20 coordinates ATP; the sequence is GPTASGKT. Residue 15–20 coordinates substrate; it reads TASGKT. Interaction with substrate tRNA regions lie at residues 42–45, 166–170, 251–256, and 284–291; these read DSAL, QRIQR, RCVGYR, and KRQITWLR.

Belongs to the IPP transferase family. In terms of assembly, monomer. Mg(2+) is required as a cofactor.

The catalysed reaction is adenosine(37) in tRNA + dimethylallyl diphosphate = N(6)-dimethylallyladenosine(37) in tRNA + diphosphate. In terms of biological role, catalyzes the transfer of a dimethylallyl group onto the adenine at position 37 in tRNAs that read codons beginning with uridine, leading to the formation of N6-(dimethylallyl)adenosine (i(6)A). The protein is tRNA dimethylallyltransferase of Acidovorax sp. (strain JS42).